We begin with the raw amino-acid sequence, 150 residues long: UPF0178 protein Bcen2424_1660 (150 aa).

It belongs to the UPF0178 family.

The chain is UPF0178 protein Bcen2424_1660 from Burkholderia cenocepacia (strain HI2424).